Here is a 350-residue protein sequence, read N- to C-terminus: Probable peptidyl-alpha-hydroxyglycine alpha-amidating lyase pgal-1 (350 aa).

The first 19 residues, 1-19, serve as a signal peptide directing secretion; the sequence is MRASTACLVALLAPFYISA. The stretch at 46–90 is one NHL 1 repeat; sequence DRELIGLFNPSKEIGQVSGLAVNKNGHIVAFHRSGRVWDEKSFND. An N-linked (GlcNAc...) asparagine glycan is attached at asparagine 103. 3 NHL repeats span residues 113 to 154, 162 to 206, and 212 to 256; these read KKVI…IDAK, LGEK…FDAK, and QINA…FSAG. 2 disulfide bridges follow: cysteine 176/cysteine 196 and cysteine 241/cysteine 252.

Belongs to the peptidyl-alpha-hydroxyglycine alpha-amidating lyase family. Zn(2+) serves as cofactor.

Its subcellular location is the secreted. It catalyses the reaction a [peptide]-C-terminal (2S)-2-hydroxyglycine = a [peptide]-C-terminal amide + glyoxylate. Its function is as follows. Probable lyase that catalyzes an essential reaction in C-terminal alpha-amidation of peptides. Mediates the dismutation of the unstable peptidyl(2-hydroxyglycine) intermediate to glyoxylate and the corresponding desglycine peptide amide. C-terminal amidation of peptides such as neuropeptides is essential for full biological activity. This Caenorhabditis elegans protein is Probable peptidyl-alpha-hydroxyglycine alpha-amidating lyase pgal-1.